The sequence spans 261 residues: Cytochrome c oxidase subunit 3 (261 aa).

Residues 1 to 15 (MTHQTHAYHMVNPSP) are Mitochondrial matrix-facing. A helical membrane pass occupies residues 16-34 (WPLTGALSALLMTSGLVMW). Over 35–40 (FHYHST) the chain is Mitochondrial intermembrane. The chain crosses the membrane as a helical span at residues 41–66 (ILVLLGLLTNILTMYQWWRDVVREGT). At 67–72 (FQGHHT) the chain is on the mitochondrial matrix side. Residues 73-105 (PTVQKGLRYGMVLFIISEVFFFAGFFWAFYHSS) traverse the membrane as a helical segment. The Mitochondrial intermembrane portion of the chain corresponds to 106-128 (LAPTPELGGCWPPTGIHPLDPME). A helical membrane pass occupies residues 129 to 152 (VPLLNTSVLLASGVTITWAHHSLM). Residues 153–155 (EGN) lie on the Mitochondrial matrix side of the membrane. A helical transmembrane segment spans residues 156–183 (RKQMLQALFITISLGIYFTLLQASEYHE). Residues 184–190 (ASFSISD) are Mitochondrial intermembrane-facing. Residues 191–223 (GIYGSTFFMATGFHGLHVIIGSTFLAVCFLRQL) traverse the membrane as a helical segment. Topologically, residues 224-232 (KFHFTSNHH) are mitochondrial matrix. Residues 233–256 (FGFEAAAWYWHFVDVVWLFLYVSI) traverse the membrane as a helical segment. Topologically, residues 257–261 (YWWGS) are mitochondrial intermembrane.

The protein belongs to the cytochrome c oxidase subunit 3 family. Component of the cytochrome c oxidase (complex IV, CIV), a multisubunit enzyme composed of 14 subunits. The complex is composed of a catalytic core of 3 subunits MT-CO1, MT-CO2 and MT-CO3, encoded in the mitochondrial DNA, and 11 supernumerary subunits COX4I, COX5A, COX5B, COX6A, COX6B, COX6C, COX7A, COX7B, COX7C, COX8 and NDUFA4, which are encoded in the nuclear genome. The complex exists as a monomer or a dimer and forms supercomplexes (SCs) in the inner mitochondrial membrane with NADH-ubiquinone oxidoreductase (complex I, CI) and ubiquinol-cytochrome c oxidoreductase (cytochrome b-c1 complex, complex III, CIII), resulting in different assemblies (supercomplex SCI(1)III(2)IV(1) and megacomplex MCI(2)III(2)IV(2)).

The protein resides in the mitochondrion inner membrane. It carries out the reaction 4 Fe(II)-[cytochrome c] + O2 + 8 H(+)(in) = 4 Fe(III)-[cytochrome c] + 2 H2O + 4 H(+)(out). Its function is as follows. Component of the cytochrome c oxidase, the last enzyme in the mitochondrial electron transport chain which drives oxidative phosphorylation. The respiratory chain contains 3 multisubunit complexes succinate dehydrogenase (complex II, CII), ubiquinol-cytochrome c oxidoreductase (cytochrome b-c1 complex, complex III, CIII) and cytochrome c oxidase (complex IV, CIV), that cooperate to transfer electrons derived from NADH and succinate to molecular oxygen, creating an electrochemical gradient over the inner membrane that drives transmembrane transport and the ATP synthase. Cytochrome c oxidase is the component of the respiratory chain that catalyzes the reduction of oxygen to water. Electrons originating from reduced cytochrome c in the intermembrane space (IMS) are transferred via the dinuclear copper A center (CU(A)) of subunit 2 and heme A of subunit 1 to the active site in subunit 1, a binuclear center (BNC) formed by heme A3 and copper B (CU(B)). The BNC reduces molecular oxygen to 2 water molecules using 4 electrons from cytochrome c in the IMS and 4 protons from the mitochondrial matrix. The chain is Cytochrome c oxidase subunit 3 (MT-CO3) from Dugong dugon (Dugong).